A 225-amino-acid polypeptide reads, in one-letter code: tRNA (guanine-N(7)-)-methyltransferase (225 aa).

The S-adenosyl-L-methionine site is built by glutamate 56, glutamate 81, aspartate 108, and aspartate 131. Residue aspartate 131 is part of the active site. Residues lysine 135, aspartate 167, and 204 to 207 (TKFE) each bind substrate.

The protein belongs to the class I-like SAM-binding methyltransferase superfamily. TrmB family.

The catalysed reaction is guanosine(46) in tRNA + S-adenosyl-L-methionine = N(7)-methylguanosine(46) in tRNA + S-adenosyl-L-homocysteine. It functions in the pathway tRNA modification; N(7)-methylguanine-tRNA biosynthesis. Functionally, catalyzes the formation of N(7)-methylguanine at position 46 (m7G46) in tRNA. The protein is tRNA (guanine-N(7)-)-methyltransferase of Legionella pneumophila (strain Lens).